Here is a 148-residue protein sequence, read N- to C-terminus: Putative pre-16S rRNA nuclease (148 aa).

It belongs to the YqgF nuclease family.

The protein localises to the cytoplasm. In terms of biological role, could be a nuclease involved in processing of the 5'-end of pre-16S rRNA. The chain is Putative pre-16S rRNA nuclease from Nitrosomonas europaea (strain ATCC 19718 / CIP 103999 / KCTC 2705 / NBRC 14298).